The sequence spans 764 residues: Subtilisin-like protease SBT1.6 (764 aa).

Residues 1–20 (MASSTIVLLLFLSFPFISFA) form the signal peptide. In terms of domain architecture, Inhibitor I9 spans 46–99 (HWYSTEFAEESRIVHVYHTVFHGFSAVVTPDEADNLRNHPAVLAVFEDRRRELH). The Peptidase S8 domain occupies 103-606 (SPQFLGLQNQ…SGHLNLGRAM (504 aa)). Aspartate 131 serves as the catalytic Charge relay system. Asparagine 191 carries an N-linked (GlcNAc...) asparagine glycan. The active-site Charge relay system is the histidine 205. One can recognise a PA domain in the interval 377–457 (SSASLCMENT…NEGDRIKAYA (81 aa)). Serine 538 functions as the Charge relay system in the catalytic mechanism. A glycan (N-linked (GlcNAc...) asparagine) is linked at asparagine 578.

It belongs to the peptidase S8 family. Expressed in roots, leaves and flowers of mature plants.

The polypeptide is Subtilisin-like protease SBT1.6 (Arabidopsis thaliana (Mouse-ear cress)).